A 151-amino-acid chain; its full sequence is Ribosome maturation factor RimP (151 aa).

Belongs to the RimP family.

Its subcellular location is the cytoplasm. Functionally, required for maturation of 30S ribosomal subunits. The chain is Ribosome maturation factor RimP from Haemophilus influenzae (strain PittGG).